A 149-amino-acid polypeptide reads, in one-letter code: Transcriptional regulator MraZ (149 aa).

2 consecutive SpoVT-AbrB domains span residues 6–52 (RSHR…PYPD) and 81–124 (AEEM…DQSK).

This sequence belongs to the MraZ family. Forms oligomers.

It localises to the cytoplasm. The protein resides in the nucleoid. This chain is Transcriptional regulator MraZ, found in Nitratidesulfovibrio vulgaris (strain ATCC 29579 / DSM 644 / CCUG 34227 / NCIMB 8303 / VKM B-1760 / Hildenborough) (Desulfovibrio vulgaris).